Reading from the N-terminus, the 490-residue chain is Cardiolipin synthase A (490 aa).

A run of 2 helical transmembrane segments spans residues 20 to 40 (LGLLLVGIQVLGFVAAIHAVL) and 49 to 69 (IAWATSLVFMPYLTLLPYLVF). 2 PLD phosphodiesterase domains span residues 229–256 (VNFRNHRKVVVVDGECGFVGGHNVGVEY) and 403–430 (QPGFLHQKVVLVDRDTAAVGSANLDNRS). Active-site residues include H234, K236, D241, H408, K410, and D415.

Belongs to the phospholipase D family. Cardiolipin synthase subfamily. ClsA sub-subfamily.

The protein resides in the cell inner membrane. It catalyses the reaction 2 a 1,2-diacyl-sn-glycero-3-phospho-(1'-sn-glycerol) = a cardiolipin + glycerol. In terms of biological role, catalyzes the reversible phosphatidyl group transfer from one phosphatidylglycerol molecule to another to form cardiolipin (CL) (diphosphatidylglycerol) and glycerol. The polypeptide is Cardiolipin synthase A (Pseudomonas aeruginosa (strain LESB58)).